The following is a 452-amino-acid chain: THO complex subunit 5A (452 aa).

Belongs to the THOC5 family. In terms of assembly, component of the THO complex, which is composed of THO1, THO2, THO3, THO5, THO6 and THO7.

It is found in the nucleus. Acts as a component of the THO subcomplex of the TREX complex which is thought to couple mRNA transcription, processing and nuclear export. The sequence is that of THO complex subunit 5A (THO5A) from Arabidopsis thaliana (Mouse-ear cress).